Consider the following 449-residue polypeptide: Elongation factor 1-alpha (449 aa).

The tr-type G domain maps to 5-230 (KVHINIVVIG…DQINEPKRPS (226 aa)). A G1 region spans residues 14–21 (GHVDSGKS). A GTP-binding site is contributed by 14–21 (GHVDSGKS). Lysine 55 bears the N6,N6-dimethyllysine mark. The segment at 70-74 (GITID) is G2. An N6,N6,N6-trimethyllysine modification is found at lysine 79. Positions 91-94 (DAPG) are G3. GTP-binding positions include 91–95 (DAPGH) and 153–156 (NKMD). The G4 stretch occupies residues 153–156 (NKMD). N6,N6,N6-trimethyllysine is present on lysine 187. The G5 stretch occupies residues 194-196 (SGF). Lysine 261 carries the post-translational modification N6-methyllysine. The residue at position 289 (glutamate 289) is a 5-glutamyl glycerylphosphorylethanolamine. Position 306 is an N6,N6,N6-trimethyllysine (lysine 306). Glutamate 362 carries the 5-glutamyl glycerylphosphorylethanolamine modification. At lysine 396 the chain carries N6,N6,N6-trimethyllysine.

Belongs to the TRAFAC class translation factor GTPase superfamily. Classic translation factor GTPase family. EF-Tu/EF-1A subfamily.

The protein resides in the cytoplasm. In terms of biological role, this protein promotes the GTP-dependent binding of aminoacyl-tRNA to the A-site of ribosomes during protein biosynthesis. This is Elongation factor 1-alpha from Daucus carota (Wild carrot).